Consider the following 390-residue polypeptide: Bibenzyl synthase (390 aa).

Cysteine 164 is an active-site residue.

The protein belongs to the thiolase-like superfamily. Chalcone/stilbene synthases family.

The catalysed reaction is 3-(3-hydroxyphenyl)-propanoyl-CoA + 3 malonyl-CoA + 3 H(+) = 3,3',5-trihydroxybibenzyl + 4 CO2 + 4 CoA. The chain is Bibenzyl synthase (BIBSY212) from Phalaenopsis sp. (Moth orchid).